A 393-amino-acid polypeptide reads, in one-letter code: NAD(P)H-quinone oxidoreductase subunit H, chloroplastic (393 aa).

This sequence belongs to the complex I 49 kDa subunit family. In terms of assembly, NDH is composed of at least 16 different subunits, 5 of which are encoded in the nucleus.

The protein localises to the plastid. It localises to the chloroplast thylakoid membrane. The enzyme catalyses a plastoquinone + NADH + (n+1) H(+)(in) = a plastoquinol + NAD(+) + n H(+)(out). It carries out the reaction a plastoquinone + NADPH + (n+1) H(+)(in) = a plastoquinol + NADP(+) + n H(+)(out). Its function is as follows. NDH shuttles electrons from NAD(P)H:plastoquinone, via FMN and iron-sulfur (Fe-S) centers, to quinones in the photosynthetic chain and possibly in a chloroplast respiratory chain. The immediate electron acceptor for the enzyme in this species is believed to be plastoquinone. Couples the redox reaction to proton translocation, and thus conserves the redox energy in a proton gradient. This is NAD(P)H-quinone oxidoreductase subunit H, chloroplastic from Oryza nivara (Indian wild rice).